The primary structure comprises 146 residues: Putative inactive cytochrome P450 2G1 (146 aa).

C91 contacts heme.

Belongs to the cytochrome P450 family. Heme is required as a cofactor.

The protein is Putative inactive cytochrome P450 2G1 (CYP2G1P) of Homo sapiens (Human).